A 357-amino-acid chain; its full sequence is Peptide chain release factor 1 (357 aa).

Position 234 is an N5-methylglutamine (Q234). The tract at residues 283 to 313 (SKKQEQRSSNRKQQVGSGDRSERIRTYNFPQ) is disordered.

It belongs to the prokaryotic/mitochondrial release factor family. Methylated by PrmC. Methylation increases the termination efficiency of RF1.

The protein resides in the cytoplasm. Functionally, peptide chain release factor 1 directs the termination of translation in response to the peptide chain termination codons UAG and UAA. This chain is Peptide chain release factor 1 (prfA), found in Borreliella burgdorferi (strain ATCC 35210 / DSM 4680 / CIP 102532 / B31) (Borrelia burgdorferi).